We begin with the raw amino-acid sequence, 297 residues long: Nucleotide-binding protein CJA_2809 (297 aa).

8–15 serves as a coordination point for ATP; the sequence is GLSGSGKT. 59–62 contacts GTP; the sequence is DVRN.

It belongs to the RapZ-like family.

Functionally, displays ATPase and GTPase activities. This Cellvibrio japonicus (strain Ueda107) (Pseudomonas fluorescens subsp. cellulosa) protein is Nucleotide-binding protein CJA_2809.